A 185-amino-acid polypeptide reads, in one-letter code: Large ribosomal subunit protein uL5 (185 aa).

It belongs to the universal ribosomal protein uL5 family. In terms of assembly, part of the 50S ribosomal subunit; part of the 5S rRNA/L5/L18/L25 subcomplex. Contacts the 5S rRNA and the P site tRNA. Forms a bridge to the 30S subunit in the 70S ribosome.

Its function is as follows. This is one of the proteins that bind and probably mediate the attachment of the 5S RNA into the large ribosomal subunit, where it forms part of the central protuberance. In the 70S ribosome it contacts protein S13 of the 30S subunit (bridge B1b), connecting the 2 subunits; this bridge is implicated in subunit movement. Contacts the P site tRNA; the 5S rRNA and some of its associated proteins might help stabilize positioning of ribosome-bound tRNAs. This Rhizobium rhizogenes (strain K84 / ATCC BAA-868) (Agrobacterium radiobacter) protein is Large ribosomal subunit protein uL5.